Here is a 381-residue protein sequence, read N- to C-terminus: Erythronate-4-phosphate dehydrogenase (381 aa).

Substrate is bound by residues serine 45 and threonine 66. Residues aspartate 146, threonine 174, 205–207, and aspartate 231 contribute to the NAD(+) site; that span reads ASR. Arginine 207 is an active-site residue. Glutamate 236 is an active-site residue. Histidine 253 acts as the Proton donor in catalysis. NAD(+) is bound at residue glycine 256. Residue tyrosine 257 participates in substrate binding.

Belongs to the D-isomer specific 2-hydroxyacid dehydrogenase family. PdxB subfamily. Homodimer.

It localises to the cytoplasm. It carries out the reaction 4-phospho-D-erythronate + NAD(+) = (R)-3-hydroxy-2-oxo-4-phosphooxybutanoate + NADH + H(+). It participates in cofactor biosynthesis; pyridoxine 5'-phosphate biosynthesis; pyridoxine 5'-phosphate from D-erythrose 4-phosphate: step 2/5. Catalyzes the oxidation of erythronate-4-phosphate to 3-hydroxy-2-oxo-4-phosphonooxybutanoate. This chain is Erythronate-4-phosphate dehydrogenase, found in Stutzerimonas stutzeri (strain A1501) (Pseudomonas stutzeri).